We begin with the raw amino-acid sequence, 157 residues long: SsrA-binding protein (157 aa).

The segment at G126 to G157 is disordered. A compositionally biased stretch (basic and acidic residues) spans Q132 to G157.

The protein belongs to the SmpB family.

Its subcellular location is the cytoplasm. Functionally, required for rescue of stalled ribosomes mediated by trans-translation. Binds to transfer-messenger RNA (tmRNA), required for stable association of tmRNA with ribosomes. tmRNA and SmpB together mimic tRNA shape, replacing the anticodon stem-loop with SmpB. tmRNA is encoded by the ssrA gene; the 2 termini fold to resemble tRNA(Ala) and it encodes a 'tag peptide', a short internal open reading frame. During trans-translation Ala-aminoacylated tmRNA acts like a tRNA, entering the A-site of stalled ribosomes, displacing the stalled mRNA. The ribosome then switches to translate the ORF on the tmRNA; the nascent peptide is terminated with the 'tag peptide' encoded by the tmRNA and targeted for degradation. The ribosome is freed to recommence translation, which seems to be the essential function of trans-translation. The chain is SsrA-binding protein from Methylobacterium radiotolerans (strain ATCC 27329 / DSM 1819 / JCM 2831 / NBRC 15690 / NCIMB 10815 / 0-1).